We begin with the raw amino-acid sequence, 576 residues long: Arginine--tRNA ligase (576 aa).

The 'HIGH' region signature appears at 122 to 132 (PNVAKEMHVGH).

It belongs to the class-I aminoacyl-tRNA synthetase family. As to quaternary structure, monomer.

The protein localises to the cytoplasm. The catalysed reaction is tRNA(Arg) + L-arginine + ATP = L-arginyl-tRNA(Arg) + AMP + diphosphate. The chain is Arginine--tRNA ligase from Sodalis glossinidius (strain morsitans).